The sequence spans 571 residues: MQTNLSQLIKVARGEAKADLVLLNARVVNVFNAEIEPANVAVFGGQIAGVGDYTLGNRVLDLKGAYLLPGLINGHTHVESSMLDISQYARAVIAHGTSALITDLHEISNVCGKEGIDYVLSASADLPLNIFLQVPSCVPATHLETAGAEINSNDVTELLRLPNVTGLGEMMNFPGVLFGIPSVLDKIEAASGKVLDGHAPGLSGKDLNAYISAGIHSDHECIQLDEAKEKLARGMYIMIREGSSEKNLTELLPLVTDKTYKRCIFVVDDRSCADLQRDGDIDAVVRKAIKLGLDPVRAIQLASINTAEYFRLNGHGAIAPGYLANMIVCQDLNQLDIDMVFHKGELVAEKGQVLFKPQSHVPKSLLSSMHIKPFDIKDLAIKGSSTQMPVIEVIPGQIVTRRLNLKIPAENGVLTPDIEQDLLKIVVLERHCQSGNIGRGLIKGFGLKKGAIASSVAHDSHNVIAVGTNDADIYTAVKELERINGGIALVVDGKISASVPLPVAGLLSTQPLEKVVDALEEINKQAAGLGCKLSAPFATLSFMALPVIPELRLTDLGLVDVNAFKLIPQET.

It belongs to the metallo-dependent hydrolases superfamily. Adenine deaminase family. Mn(2+) is required as a cofactor.

It catalyses the reaction adenine + H2O + H(+) = hypoxanthine + NH4(+). The chain is Adenine deaminase from Dehalococcoides mccartyi (strain ATCC BAA-2266 / KCTC 15142 / 195) (Dehalococcoides ethenogenes (strain 195)).